We begin with the raw amino-acid sequence, 302 residues long: Sulfate adenylyltransferase subunit 2 (302 aa).

This sequence belongs to the PAPS reductase family. CysD subfamily. As to quaternary structure, heterodimer composed of CysD, the smaller subunit, and CysN.

The enzyme catalyses sulfate + ATP + H(+) = adenosine 5'-phosphosulfate + diphosphate. It functions in the pathway sulfur metabolism; hydrogen sulfide biosynthesis; sulfite from sulfate: step 1/3. In terms of biological role, with CysN forms the ATP sulfurylase (ATPS) that catalyzes the adenylation of sulfate producing adenosine 5'-phosphosulfate (APS) and diphosphate, the first enzymatic step in sulfur assimilation pathway. APS synthesis involves the formation of a high-energy phosphoric-sulfuric acid anhydride bond driven by GTP hydrolysis by CysN coupled to ATP hydrolysis by CysD. The protein is Sulfate adenylyltransferase subunit 2 of Shewanella pealeana (strain ATCC 700345 / ANG-SQ1).